The chain runs to 188 residues: Elongation factor P (188 aa).

This sequence belongs to the elongation factor P family.

It localises to the cytoplasm. It participates in protein biosynthesis; polypeptide chain elongation. In terms of biological role, involved in peptide bond synthesis. Stimulates efficient translation and peptide-bond synthesis on native or reconstituted 70S ribosomes in vitro. Probably functions indirectly by altering the affinity of the ribosome for aminoacyl-tRNA, thus increasing their reactivity as acceptors for peptidyl transferase. The chain is Elongation factor P from Chlorobium limicola (strain DSM 245 / NBRC 103803 / 6330).